A 376-amino-acid chain; its full sequence is DNA repair protein RAD51 homolog 3 (376 aa).

The required for Holliday junction resolution activity stretch occupies residues 1–126; it reads MRGKTFRFEM…LMKTTEICGA (126 aa). Serine 20 bears the Phosphoserine mark. The segment at 79–136 is interaction with RAD51B, RAD51D and XRCC3; the sequence is SESHKKCTALELLEQEHTQGFIITFCSALDDILGGGVPLMKTTEICGAPGVGKTQLCM. 125-132 provides a ligand contact to ATP; it reads GAPGVGKT. The Nuclear localization signal motif lies at 366 to 370; that stretch reads RKRSR.

This sequence belongs to the RecA family. RAD51 subfamily. As to quaternary structure, part of the RAD51 paralog protein complexes BCDX2 and CX3; the complexes have a ring-like structure arranged into a flat disc around a central channel. The BCDX2 complex consits of RAD51B, RAD51C, RAD51D and XRCC2; the CX3 complex consists of RAD51C and XRCC3. The BCDX2 subcomplex RAD51B:RAD51C interacts with RAD51. Interacts with SWSAP1; involved in homologous recombination repair. Interacts directly with PALB2 which may serve as a scaffold for a HR complex containing PALB2, BRCA2, RAD51C, RAD51 and XRCC3. Interacts with HELQ. Interacts with DNA damage up-regulated protein DDUP. As to expression, expressed in a variety of tissues, with highest expression in testis, heart muscle, spleen and prostate.

It localises to the nucleus. The protein localises to the cytoplasm. It is found in the perinuclear region. Its subcellular location is the mitochondrion. Essential for the homologous recombination (HR) pathway of DNA repair. Involved in the homologous recombination repair (HRR) pathway of double-stranded DNA breaks arising during DNA replication or induced by DNA-damaging agents. Part of the RAD51 paralog protein complexes BCDX2 and CX3 which act at different stages of the BRCA1-BRCA2-dependent HR pathway. Upon DNA damage, BCDX2 seems to act downstream of BRCA2 recruitment and upstream of RAD51 recruitment; CX3 seems to act downstream of RAD51 recruitment; both complexes bind predominantly to the intersection of the four duplex arms of the Holliday junction (HJ) and to junction of replication forks. The BCDX2 complex was originally reported to bind single-stranded DNA, single-stranded gaps in duplex DNA and specifically to nicks in duplex DNA. The BCDX2 subcomplex RAD51B:RAD51C exhibits single-stranded DNA-dependent ATPase activity suggesting an involvement in early stages of the HR pathway. Involved in RAD51 foci formation in response to DNA damage suggesting an involvement in early stages of HR probably in the invasion step. Has an early function in DNA repair in facilitating phosphorylation of the checkpoint kinase CHEK2 and thereby transduction of the damage signal, leading to cell cycle arrest and HR activation. Participates in branch migration and HJ resolution and thus is important for processing HR intermediates late in the DNA repair process; the function may be linked to the CX3 complex. Part of a PALB2-scaffolded HR complex containing BRCA2 and which is thought to play a role in DNA repair by HR. Protects RAD51 from ubiquitin-mediated degradation that is enhanced following DNA damage. Plays a role in regulating mitochondrial DNA copy number under conditions of oxidative stress in the presence of RAD51 and XRCC3. Contributes to DNA cross-link resistance, sister chromatid cohesion and genomic stability. Involved in maintaining centrosome number in mitosis. The polypeptide is DNA repair protein RAD51 homolog 3 (RAD51C) (Homo sapiens (Human)).